The sequence spans 333 residues: Phosphate acyltransferase (333 aa).

It belongs to the PlsX family. As to quaternary structure, homodimer. Probably interacts with PlsY.

It localises to the cytoplasm. The enzyme catalyses a fatty acyl-[ACP] + phosphate = an acyl phosphate + holo-[ACP]. It functions in the pathway lipid metabolism; phospholipid metabolism. Its function is as follows. Catalyzes the reversible formation of acyl-phosphate (acyl-PO(4)) from acyl-[acyl-carrier-protein] (acyl-ACP). This enzyme utilizes acyl-ACP as fatty acyl donor, but not acyl-CoA. In Cellvibrio japonicus (strain Ueda107) (Pseudomonas fluorescens subsp. cellulosa), this protein is Phosphate acyltransferase.